Here is a 394-residue protein sequence, read N- to C-terminus: uncharacterized protein (394 aa).

It belongs to the mycobacterial PPE family.

This is an uncharacterized protein from Mycobacterium tuberculosis (strain CDC 1551 / Oshkosh).